We begin with the raw amino-acid sequence, 348 residues long: Selenide, water dikinase (348 aa).

The active site involves C17. ATP-binding positions include K20 and 48 to 50 (TSD). D51 is a Mg(2+) binding site. ATP-binding positions include D68, D91, and 139–141 (GHT). D91 serves as a coordination point for Mg(2+). D227 serves as a coordination point for Mg(2+).

It belongs to the selenophosphate synthase 1 family. Class I subfamily. Homodimer. Mg(2+) is required as a cofactor.

It catalyses the reaction hydrogenselenide + ATP + H2O = selenophosphate + AMP + phosphate + 2 H(+). Functionally, synthesizes selenophosphate from selenide and ATP. The polypeptide is Selenide, water dikinase (Dechloromonas aromatica (strain RCB)).